The sequence spans 295 residues: Ectoine dioxygenase (295 aa).

Gln-129 contacts L-ectoine. Lys-135 provides a ligand contact to 2-oxoglutarate. 3 residues coordinate Fe cation: His-146, Asp-148, and His-247.

The protein belongs to the PhyH family. EctD subfamily. In terms of assembly, homodimer. Requires Fe(2+) as cofactor.

The catalysed reaction is L-ectoine + 2-oxoglutarate + O2 = 5-hydroxyectoine + succinate + CO2. Functionally, involved in the biosynthesis of 5-hydroxyectoine, called compatible solute, which helps organisms to survive extreme osmotic stress by acting as a highly soluble organic osmolyte. Catalyzes the 2-oxoglutarate-dependent selective hydroxylation of L-ectoine to yield (4S,5S)-5-hydroxyectoine. This chain is Ectoine dioxygenase, found in Streptomyces avermitilis (strain ATCC 31267 / DSM 46492 / JCM 5070 / NBRC 14893 / NCIMB 12804 / NRRL 8165 / MA-4680).